The following is a 452-amino-acid chain: uncharacterized protein (452 aa).

The N-terminal stretch at 1-20 is a signal peptide; it reads MQFFGSLFVSLLGAAGLANA. Positions 130-151 are disordered; sequence TQSSSNSTSTMNSTGSVSGGSV.

It is found in the endoplasmic reticulum. This is an uncharacterized protein from Schizosaccharomyces pombe (strain 972 / ATCC 24843) (Fission yeast).